The chain runs to 61 residues: Large ribosomal subunit protein bL32 (61 aa).

The segment covering 1-16 (MAVPKRKTSPSRRGMR) has biased composition (basic residues). The tract at residues 1-44 (MAVPKRKTSPSRRGMRRSADALKAPTYVEDKDSGELRRPHHIDL) is disordered. Positions 28–44 (VEDKDSGELRRPHHIDL) are enriched in basic and acidic residues.

It belongs to the bacterial ribosomal protein bL32 family.

The sequence is that of Large ribosomal subunit protein bL32 from Methylobacterium nodulans (strain LMG 21967 / CNCM I-2342 / ORS 2060).